A 234-amino-acid polypeptide reads, in one-letter code: Exotoxin type G (234 aa).

The signal sequence occupies residues 1–24; sequence MKTNILTIIILSCVFSYGSQLAYA.

Belongs to the staphylococcal/streptococcal toxin family.

Mitogenic for human peripheral blood lymphocytes. This chain is Exotoxin type G (speG), found in Streptococcus pyogenes serotype M3 (strain ATCC BAA-595 / MGAS315).